We begin with the raw amino-acid sequence, 817 residues long: DNA ligase (817 aa).

Residues 45 to 49 (DVEYD), 94 to 95 (SI), and E131 contribute to the NAD(+) site. K133 functions as the N6-AMP-lysine intermediate in the catalytic mechanism. NAD(+) contacts are provided by R154, E193, K311, and K335. Residues C444, C447, C462, and C468 each contribute to the Zn(2+) site. In terms of domain architecture, BRCT spans 733–817 (AEEGVLDGKT…LLKKPAGDQA (85 aa)).

The protein belongs to the NAD-dependent DNA ligase family. LigA subfamily. The cofactor is Mg(2+). It depends on Mn(2+) as a cofactor.

It catalyses the reaction NAD(+) + (deoxyribonucleotide)n-3'-hydroxyl + 5'-phospho-(deoxyribonucleotide)m = (deoxyribonucleotide)n+m + AMP + beta-nicotinamide D-nucleotide.. Functionally, DNA ligase that catalyzes the formation of phosphodiester linkages between 5'-phosphoryl and 3'-hydroxyl groups in double-stranded DNA using NAD as a coenzyme and as the energy source for the reaction. It is essential for DNA replication and repair of damaged DNA. This is DNA ligase from Ralstonia pickettii (strain 12J).